The following is a 368-amino-acid chain: DNA replication and repair protein RecF (368 aa).

An ATP-binding site is contributed by 30–37 (GKNGSGKT).

It belongs to the RecF family.

It localises to the cytoplasm. Its function is as follows. The RecF protein is involved in DNA metabolism; it is required for DNA replication and normal SOS inducibility. RecF binds preferentially to single-stranded, linear DNA. It also seems to bind ATP. The polypeptide is DNA replication and repair protein RecF (Marinomonas sp. (strain MWYL1)).